The following is a 1053-amino-acid chain: DNA-directed RNA polymerase subunit beta' (1053 aa).

Cys60, Cys62, Cys75, and Cys78 together coordinate Zn(2+). Positions 449, 451, and 453 each coordinate Mg(2+).

This sequence belongs to the RNA polymerase beta' chain family. As to quaternary structure, the RNAP catalytic core consists of 2 alpha, 1 beta, 1 beta' and 1 omega subunit. When a sigma factor is associated with the core the holoenzyme is formed, which can initiate transcription. Mg(2+) serves as cofactor. It depends on Zn(2+) as a cofactor.

The enzyme catalyses RNA(n) + a ribonucleoside 5'-triphosphate = RNA(n+1) + diphosphate. DNA-dependent RNA polymerase catalyzes the transcription of DNA into RNA using the four ribonucleoside triphosphates as substrates. In Brochothrix thermosphacta (Microbacterium thermosphactum), this protein is DNA-directed RNA polymerase subunit beta'.